The chain runs to 706 residues: Translation initiation factor IF-2 (706 aa).

Positions 55–117 (KEVNSDSNQE…PTMKDEKGLI (63 aa)) are disordered. Residues 67–81 (VNTDDKLDKIDKPNK) show a composition bias toward basic and acidic residues. The span at 93-108 (KNKKSKKKQKNKKKGP) shows a compositional bias: basic residues. Residues 208–375 (SRPPVVTVMG…MILLVSEVEE (168 aa)) enclose the tr-type G domain. The G1 stretch occupies residues 217 to 224 (GHVDHGKT). 217 to 224 (GHVDHGKT) contributes to the GTP binding site. The interval 242–246 (GITQH) is G2. The G3 stretch occupies residues 263-266 (DTPG). GTP-binding positions include 263–267 (DTPGH) and 317–320 (NKID). Residues 317 to 320 (NKID) form a G4 region. The G5 stretch occupies residues 353-355 (SAI).

Belongs to the TRAFAC class translation factor GTPase superfamily. Classic translation factor GTPase family. IF-2 subfamily.

It localises to the cytoplasm. Functionally, one of the essential components for the initiation of protein synthesis. Protects formylmethionyl-tRNA from spontaneous hydrolysis and promotes its binding to the 30S ribosomal subunits. Also involved in the hydrolysis of GTP during the formation of the 70S ribosomal complex. This chain is Translation initiation factor IF-2, found in Alkaliphilus metalliredigens (strain QYMF).